Consider the following 772-residue polypeptide: 1,4-alpha-glucan branching enzyme GlgB (772 aa).

Aspartate 431 (nucleophile) is an active-site residue. Glutamate 484 (proton donor) is an active-site residue.

The protein belongs to the glycosyl hydrolase 13 family. GlgB subfamily. As to quaternary structure, monomer.

The enzyme catalyses Transfers a segment of a (1-&gt;4)-alpha-D-glucan chain to a primary hydroxy group in a similar glucan chain.. The protein operates within glycan biosynthesis; glycogen biosynthesis. Catalyzes the formation of the alpha-1,6-glucosidic linkages in glycogen by scission of a 1,4-alpha-linked oligosaccharide from growing alpha-1,4-glucan chains and the subsequent attachment of the oligosaccharide to the alpha-1,6 position. The sequence is that of 1,4-alpha-glucan branching enzyme GlgB from Synechococcus sp. (strain RCC307).